The sequence spans 82 residues: U17-hexatoxin-Hi1a (82 aa).

The signal sequence occupies residues 1–21 (MKTIFAVTLLLFAIYVPECMP). Disulfide bonds link Cys22–Cys33, Cys27–Cys48, Cys32–Cys61, Cys58–Cys69, and Cys63–Cys75.

As to expression, expressed by the venom gland.

The protein resides in the secreted. Functionally, probable ion channel inhibitor. This is U17-hexatoxin-Hi1a from Hadronyche infensa (Fraser island funnel-web spider).